A 246-amino-acid polypeptide reads, in one-letter code: uncharacterized protein (246 aa).

Residues 204–243 (TTKLKKLEKEIHELPYMLINGKITYEEYKKRIREIEKEIG) adopt a coiled-coil conformation.

This is an uncharacterized protein from Aquifex aeolicus (strain VF5).